The primary structure comprises 117 residues: UPF0295 protein Bsph_0336 (117 aa).

The next 2 helical transmembrane spans lie at 13-33 (SFAL…IFFK) and 37-57 (ILVL…TVVY).

Belongs to the UPF0295 family.

The protein resides in the cell membrane. The polypeptide is UPF0295 protein Bsph_0336 (Lysinibacillus sphaericus (strain C3-41)).